A 632-amino-acid chain; its full sequence is tRNA uridine 5-carboxymethylaminomethyl modification enzyme MnmG (632 aa).

15–20 (GAGHAG) is a binding site for FAD. The disordered stretch occupies residues 205-231 (PRVDGNTIDYSKTQEEPGDKEPRHFSY). Residues 216-228 (KTQEEPGDKEPRH) are compositionally biased toward basic and acidic residues. 276–290 (GPRYCPSIEDKVVRF) lines the NAD(+) pocket.

It belongs to the MnmG family. As to quaternary structure, homodimer. Heterotetramer of two MnmE and two MnmG subunits. The cofactor is FAD.

It localises to the cytoplasm. NAD-binding protein involved in the addition of a carboxymethylaminomethyl (cmnm) group at the wobble position (U34) of certain tRNAs, forming tRNA-cmnm(5)s(2)U34. In Lactobacillus johnsonii (strain CNCM I-12250 / La1 / NCC 533), this protein is tRNA uridine 5-carboxymethylaminomethyl modification enzyme MnmG.